The chain runs to 66 residues: Large ribosomal subunit protein bL35 (66 aa).

This sequence belongs to the bacterial ribosomal protein bL35 family. In terms of assembly, part of the 50S ribosomal subunit. Contacts proteins L15 and L33.

In terms of biological role, binds the 23S rRNA. The chain is Large ribosomal subunit protein bL35 (rpmI) from Deinococcus radiodurans (strain ATCC 13939 / DSM 20539 / JCM 16871 / CCUG 27074 / LMG 4051 / NBRC 15346 / NCIMB 9279 / VKM B-1422 / R1).